Consider the following 1748-residue polypeptide: RANBP2-like and GRIP domain-containing protein 1 (1748 aa).

Threonine 14 is subject to Phosphothreonine. TPR repeat units lie at residues 51-84, 575-608, and 639-672; these read PRAHRFLGLLYELEENTEKAVECYRRSLELNPPQ, QKMGRGLNSSYDQQEYIGRSVHYWKKVLPLLKII, and EDAHITFAILDAVHGNIEDAVTAFESIKSVVSYW. Positions 751-796 are disordered; that stretch reads GPLYKNGSLRNADSEIKHSTPSPTKYSLSPSKSYKYSPKTPPRWAE. Low complexity predominate over residues 769 to 788; the sequence is STPSPTKYSLSPSKSYKYSP. Residues 1021–1157 enclose the RanBD1 1 domain; it reads HFEPVVQMPE…FEECQRLLLD (137 aa). Disordered stretches follow at residues 1198 to 1233 and 1291 to 1316; these read TKVTEEENKGSGTGAAGASDTTIKPNPENTGPTLEW and AKLNQSGTSVGTDEESDVTQEEERDG. The span at 1220–1229 shows a compositional bias: polar residues; it reads IKPNPENTGP. Residues 1302 to 1314 are compositionally biased toward acidic residues; it reads TDEESDVTQEEER. Residues 1318–1454 enclose the RanBD1 2 domain; it reads YFEPVVPLPD…FDEAKTAQEK (137 aa). A compositionally biased stretch (polar residues) spans 1565–1578; that stretch reads NDSETSSVAQSGSE. A disordered region spans residues 1565 to 1606; sequence NDSETSSVAQSGSESKVEPKKCELSKNSDIEQSSDSKVKNLS. Residues 1579–1602 are compositionally biased toward basic and acidic residues; the sequence is SKVEPKKCELSKNSDIEQSSDSKV. Positions 1685–1735 constitute a GRIP domain; sequence QEESAANVEHLKNVLLQFIFLKPGSERESLLPVINTMLQLSPEEKGKLAAV.

This Homo sapiens (Human) protein is RANBP2-like and GRIP domain-containing protein 1 (RGPD1).